The chain runs to 388 residues: Formate-dependent phosphoribosylglycinamide formyltransferase (388 aa).

N(1)-(5-phospho-beta-D-ribosyl)glycinamide is bound by residues 20–21 (EL) and Glu-80. Residues Arg-112, Lys-153, 158 to 163 (SSGKGQ), 193 to 196 (EEFI), and Glu-201 contribute to the ATP site. Residues 117–306 (RLAFEKLGLR…EFEIHARAIL (190 aa)) form the ATP-grasp domain. The Mg(2+) site is built by Glu-265 and Glu-277. N(1)-(5-phospho-beta-D-ribosyl)glycinamide contacts are provided by residues Asp-284, Lys-352, and 359–360 (RR).

This sequence belongs to the PurK/PurT family. In terms of assembly, homodimer.

The catalysed reaction is N(1)-(5-phospho-beta-D-ribosyl)glycinamide + formate + ATP = N(2)-formyl-N(1)-(5-phospho-beta-D-ribosyl)glycinamide + ADP + phosphate + H(+). The protein operates within purine metabolism; IMP biosynthesis via de novo pathway; N(2)-formyl-N(1)-(5-phospho-D-ribosyl)glycinamide from N(1)-(5-phospho-D-ribosyl)glycinamide (formate route): step 1/1. Involved in the de novo purine biosynthesis. Catalyzes the transfer of formate to 5-phospho-ribosyl-glycinamide (GAR), producing 5-phospho-ribosyl-N-formylglycinamide (FGAR). Formate is provided by PurU via hydrolysis of 10-formyl-tetrahydrofolate. This chain is Formate-dependent phosphoribosylglycinamide formyltransferase, found in Methanococcus maripaludis (strain DSM 14266 / JCM 13030 / NBRC 101832 / S2 / LL).